The primary structure comprises 270 residues: Diaminopimelate epimerase (270 aa).

Substrate contacts are provided by asparagine 15, glutamine 49, and asparagine 66. The active-site Proton donor is the cysteine 75. Residues 76–77, asparagine 155, asparagine 187, and 204–205 each bind substrate; these read GN and ER. Residue cysteine 213 is the Proton acceptor of the active site. 214–215 is a substrate binding site; that stretch reads GS.

The protein belongs to the diaminopimelate epimerase family. As to quaternary structure, homodimer.

Its subcellular location is the cytoplasm. The catalysed reaction is (2S,6S)-2,6-diaminopimelate = meso-2,6-diaminopimelate. The protein operates within amino-acid biosynthesis; L-lysine biosynthesis via DAP pathway; DL-2,6-diaminopimelate from LL-2,6-diaminopimelate: step 1/1. Functionally, catalyzes the stereoinversion of LL-2,6-diaminopimelate (L,L-DAP) to meso-diaminopimelate (meso-DAP), a precursor of L-lysine and an essential component of the bacterial peptidoglycan. The chain is Diaminopimelate epimerase from Rickettsia africae (strain ESF-5).